A 488-amino-acid polypeptide reads, in one-letter code: Eukaryotic translation initiation factor 3 subunit L (488 aa).

Disordered stretches follow at residues 1-34 (MSLP…YREQ) and 427-449 (SEGG…HGKE). The span at 7–16 (QNRDAARRAP) shows a compositional bias: basic and acidic residues. Positions 17-27 (DDDDDAEEETM) are enriched in acidic residues. The PCI domain occupies 256–450 (DAIRMFSHIL…RSRLRHGKEI (195 aa)). Positions 431–440 (LLERRGDPQQ) are enriched in basic and acidic residues.

Belongs to the eIF-3 subunit L family. As to quaternary structure, component of the eukaryotic translation initiation factor 3 (eIF-3) complex.

The protein resides in the cytoplasm. Component of the eukaryotic translation initiation factor 3 (eIF-3) complex, which is involved in protein synthesis of a specialized repertoire of mRNAs and, together with other initiation factors, stimulates binding of mRNA and methionyl-tRNAi to the 40S ribosome. The eIF-3 complex specifically targets and initiates translation of a subset of mRNAs involved in cell proliferation. This chain is Eukaryotic translation initiation factor 3 subunit L, found in Phaeosphaeria nodorum (strain SN15 / ATCC MYA-4574 / FGSC 10173) (Glume blotch fungus).